The following is a 688-amino-acid chain: Lipase (688 aa).

A signal peptide spans 1-35 (MKTRQNKYSIRKFSVGASSILIAALLFMGGGSAQA). Positions 31–309 (GSAQAAEQQQ…KSAKQKQYKN (279 aa)) are disordered. The propeptide at 36-302 (AEQQQDKGTV…KNEDQTNKSA (267 aa)) is removed in mature form. Residues 45–54 (VENSTTQSIG) show a composition bias toward polar residues. Over residues 68-79 (NKNVNEKSNVNS) the composition is skewed to low complexity. Composition is skewed to basic and acidic residues over residues 84–95 (ESLHNETPKNED) and 103–143 (SQND…KHAS). Positions 144–172 (ENNQTLHSKAAQSNEDVKTKPSQLDNTAA) are enriched in polar residues. Residues 173–183 (KQEDSQKENLS) show a composition bias toward basic and acidic residues. Residues 184-211 (KQDTQSSKTTDLLRATAQNQSKDSQSTE) are compositionally biased toward polar residues. A compositionally biased stretch (basic and acidic residues) spans 240–267 (SKEEPLKVDKQANPTTDKDKSSKNDKGS). Polar residues predominate over residues 274–289 (LESNAVATTNKQSKQQ). The active-site Nucleophile is the serine 418. The active-site Charge relay system is the aspartate 609. Aspartate 647 lines the Ca(2+) pocket. The active-site Charge relay system is histidine 648. Ca(2+) is bound by residues aspartate 650, aspartate 655, and aspartate 658.

The protein belongs to the AB hydrolase superfamily. Lipase family.

Its subcellular location is the secreted. The catalysed reaction is a triacylglycerol + H2O = a diacylglycerol + a fatty acid + H(+). This is Lipase (lip) from Staphylococcus epidermidis (strain ATCC 12228 / FDA PCI 1200).